Here is a 58-residue protein sequence, read N- to C-terminus: U11-ctenitoxin-Pn1b (58 aa).

5 cysteine pairs are disulfide-bonded: Cys-2–Cys-16, Cys-9–Cys-22, Cys-15–Cys-40, Cys-24–Cys-38, and Cys-48–Cys-55.

Expressed by the venom gland.

The protein resides in the secreted. Functionally, non-toxic to mice. The chain is U11-ctenitoxin-Pn1b from Phoneutria nigriventer (Brazilian armed spider).